Reading from the N-terminus, the 244-residue chain is MAETIKVRALPQAHCKDCSLAPLCLPLSLTVEDMDSLDEIVKRGRPLKKGEFLFRQGDPFGSVFAVRSGALKTFSITDAGEEQITGFHLPSELVGLSGMDTETYPVSAQALETTSVCEIPFERLDELSEQLPQLRRQLMRLMSREIRDDQQMMLLLSKKTADERIATFLVNLSARFRARGFSAQQFRLAMSRNEIGNYLGLAVETVSRVFTRFQQNGLISAEGKEVHILDSIELCALAGGQLEG.

Residue 21-149 (APLCLPLSLT…RLMSREIRDD (129 aa)) coordinates a nucleoside 3',5'-cyclic phosphate. The HTH crp-type domain occupies 159–232 (KTADERIATF…GKEVHILDSI (74 aa)). A DNA-binding region (H-T-H motif) is located at residues 192–211 (RNEIGNYLGLAVETVSRVFT).

In terms of biological role, transcriptional activator of anaerobic gene expression. This is Transcriptional activator protein anr (anr) from Pseudomonas aeruginosa (strain ATCC 15692 / DSM 22644 / CIP 104116 / JCM 14847 / LMG 12228 / 1C / PRS 101 / PAO1).